Reading from the N-terminus, the 361-residue chain is MAIEEKLESLTSRHAELSAHLADPTTVSDSKRFAAYSKEFSDLEPVVAAWQAHLAILQQLAETDEMLAEAGDDAEMRQMAREERETLKNKLEQSQKHLHLMLLPKDPNDDKNVILEIRAGTGGEEAALFVSDLFRMYGRFAEIKGWRIEMLSSSATDLGGYKELIAMVQGKGAYMGLKYESGVHRVQRIPVTETGGRIHTSAVTVAILPEADEVELHIEDKDLRIDVYRSSGPGGQSVNTTDSAVRITHLPTGLVVICQDEKSQHKNKAKAMKVLQARLLDAQQQAADSQRAEARKGQVGSGDRSERIRTYNFPQSRVTDHRINLTLHKLDQVLQGGLAEVVDALTAHDQASKLAHLGGGD.

Gln-236 carries the post-translational modification N5-methylglutamine. The segment at 286 to 306 is disordered; that stretch reads AADSQRAEARKGQVGSGDRSE.

This sequence belongs to the prokaryotic/mitochondrial release factor family. Methylated by PrmC. Methylation increases the termination efficiency of RF1.

The protein resides in the cytoplasm. Peptide chain release factor 1 directs the termination of translation in response to the peptide chain termination codons UAG and UAA. The chain is Peptide chain release factor 1 from Magnetococcus marinus (strain ATCC BAA-1437 / JCM 17883 / MC-1).